Consider the following 642-residue polypeptide: UvrABC system protein C (642 aa).

Residues 20-97 (ERCGVYRMFD…IKKFQPKFNI (78 aa)) enclose the GIY-YIG domain. The region spanning 207-242 (KELQENLSKKMEELSSQMRFEEAAEIRDRIKALSYV) is the UVR domain.

Belongs to the UvrC family. As to quaternary structure, interacts with UvrB in an incision complex.

The protein localises to the cytoplasm. The UvrABC repair system catalyzes the recognition and processing of DNA lesions. UvrC both incises the 5' and 3' sides of the lesion. The N-terminal half is responsible for the 3' incision and the C-terminal half is responsible for the 5' incision. This Rickettsia felis (strain ATCC VR-1525 / URRWXCal2) (Rickettsia azadi) protein is UvrABC system protein C.